The primary structure comprises 199 residues: Probable nicotinate-nucleotide adenylyltransferase (199 aa).

This sequence belongs to the NadD family.

It carries out the reaction nicotinate beta-D-ribonucleotide + ATP + H(+) = deamido-NAD(+) + diphosphate. It participates in cofactor biosynthesis; NAD(+) biosynthesis; deamido-NAD(+) from nicotinate D-ribonucleotide: step 1/1. Its function is as follows. Catalyzes the reversible adenylation of nicotinate mononucleotide (NaMN) to nicotinic acid adenine dinucleotide (NaAD). The polypeptide is Probable nicotinate-nucleotide adenylyltransferase (Roseiflexus castenholzii (strain DSM 13941 / HLO8)).